The primary structure comprises 706 residues: Maternal embryonic leucine zipper kinase (706 aa).

The Protein kinase domain maps to 11–265 (YAVHDELGSG…VKKLLEHDWL (255 aa)). ATP-binding positions include 17–25 (LGSGGFGKV) and Lys40. The Proton acceptor role is filled by Asp132. Disordered stretches follow at residues 366–386 (LDKS…SSSD), 433–493 (FTGR…SRGP), and 506–555 (SVYT…IGSA). Composition is skewed to polar residues over residues 447-461 (SVRS…SAAT) and 506-515 (SVYTTPNTRP). Residues 656–705 (QETVHGWMTVELEIVRLQMFDKVGIRRKRLKGDAFMYKKVCEKILQMAKI) form the KA1 domain.

Belongs to the protein kinase superfamily. CAMK Ser/Thr protein kinase family. SNF1 subfamily. Post-translationally, may be phosphorylated at Thr-169 by par-4 and/or autophosphorylated which likely results in its activation. Phosphorylation is not required for co-localization with the centrosome.

It is found in the cytoplasm. It localises to the cytoskeleton. The protein localises to the microtubule organizing center. Its subcellular location is the centrosome. The catalysed reaction is L-seryl-[protein] + ATP = O-phospho-L-seryl-[protein] + ADP + H(+). The enzyme catalyses L-threonyl-[protein] + ATP = O-phospho-L-threonyl-[protein] + ADP + H(+). In terms of biological role, serine/threonine-protein kinase involved in cell autonomous neuroblast asymmetric divisions that generate one precursor cell and one apoptotic cell by controlling spindle positioning, myosin distribution and the segregation of cell fate determinants. Plays a role in neural fate specification in several dopaminergic linages, acting in concert with ham-1. Involved in phosphorylation of multiple proteins associated with key developmental processes, including the cell cycle, apoptosis, endocytosis, and asymmetric cell division. Promotes cell shedding during embryogenesis, probably through the endocytosis-mediated removal of cell adhesion molecules such as hmp-1 from the cell surface. May act downstream of par-4/strd-1/mop-25 to regulate cell shedding. In Caenorhabditis elegans, this protein is Maternal embryonic leucine zipper kinase.